The sequence spans 515 residues: Fatty acyl-CoA reductase 1 (515 aa).

Residues 1-465 (MLSIPEFYQG…ARKHLNKLRN (465 aa)) lie on the Cytoplasmic side of the membrane. The helical transmembrane segment at 466–484 (IRYGFNTILVVLIWRVFIA) threads the bilayer. The Peroxisomal portion of the chain corresponds to 485–515 (RSQMARNIWYFVVSMCFKFLSYFRASSTMRY).

This sequence belongs to the fatty acyl-CoA reductase family.

It localises to the peroxisome membrane. It catalyses the reaction a long-chain fatty acyl-CoA + 2 NADPH + 2 H(+) = a long-chain primary fatty alcohol + 2 NADP(+) + CoA. The catalysed reaction is hexadecanoyl-CoA + 2 NADPH + 2 H(+) = hexadecan-1-ol + 2 NADP(+) + CoA. The enzyme catalyses octadecanoyl-CoA + 2 NADPH + 2 H(+) = octadecan-1-ol + 2 NADP(+) + CoA. It carries out the reaction (9Z)-octadecenoyl-CoA + 2 NADPH + 2 H(+) = (9Z)-octadecen-1-ol + 2 NADP(+) + CoA. It catalyses the reaction (9Z,12Z)-octadecadienoyl-CoA + 2 NADPH + 2 H(+) = (9Z,12Z)-octadecadien-1-ol + 2 NADP(+) + CoA. The catalysed reaction is eicosanoyl-CoA + 2 NADPH + 2 H(+) = eicosan-1-ol + 2 NADP(+) + CoA. The enzyme catalyses 16-methylheptadecanoyl-CoA + 2 NADPH + 2 H(+) = 16-methylheptadecan-1-ol + 2 NADP(+) + CoA. It carries out the reaction 18-methylnonadecanoyl-CoA + 2 NADPH + 2 H(+) = 18-methylnonadecan-1-ol + 2 NADP(+) + CoA. In terms of biological role, catalyzes the reduction of saturated and unsaturated C16 or C18 fatty acyl-CoA to fatty alcohols. It plays an essential role in the production of ether lipids/plasmalogens which synthesis requires fatty alcohols. In parallel, it is also required for wax monoesters production since fatty alcohols also constitute a substrate for their synthesis. In Xenopus laevis (African clawed frog), this protein is Fatty acyl-CoA reductase 1 (far1).